The chain runs to 1278 residues: SMC5-SMC6 complex localization factor protein 2 (1278 aa).

Disordered regions lie at residues 1 to 235 (MTRR…LGAR), 248 to 337 (EQKK…KRTE), 443 to 491 (RINS…FIRH), and 509 to 582 (EPED…KETK). A compositionally biased stretch (basic and acidic residues) spans 39-50 (KRTESPGDRKQS). Over residues 94–103 (SSPKKLKPKR) the composition is skewed to basic residues. Composition is skewed to basic and acidic residues over residues 118–133 (GGKE…ESRR), 156–174 (LPKE…ERRK), 180–199 (ESNR…DSRK), and 248–258 (EQKKLRKEQME). 2 stretches are compositionally biased toward polar residues: residues 259–277 (QRIN…SLKS) and 318–329 (SDSWELSGSKQN). Composition is skewed to basic and acidic residues over residues 449-463 (KEQR…KSTK) and 469-489 (KARE…EKFI). Residues 519 to 540 (ADSAPSNAGHHSSRNSDQVHSA) are compositionally biased toward polar residues. Ser591 bears the Phosphoserine mark. Disordered stretches follow at residues 598–724 (PLNA…EEEE), 739–764 (RTPT…MKEY), and 798–820 (IRQG…DDGD). Over residues 609–630 (PKKDKERSSSKERSGHSTESSK) the composition is skewed to basic and acidic residues. Low complexity-rich tracts occupy residues 643–654 (SNESSGKNSGGS), 666–675 (PPAALEVVPS), and 688–697 (SGNSNAGSNA). Residues 707–724 (DSDEESLGYTLESDEEEE) show a composition bias toward acidic residues. Ser708, Ser712, and Ser719 each carry phosphoserine. The tract at residues 740–1278 (TPTTSGKPPA…QLHDFWVPDS (539 aa)) is interaction with SIMC1. The NSE6-like domain stretch occupies residues 769–1271 (TYTNTLERLV…NCRPTQGQLH (503 aa)). A required for interaction with SLF1 and RAD18 region spans residues 807 to 1278 (PLRTGDQDST…QLHDFWVPDS (472 aa)).

The protein belongs to the FAM178 family. In terms of assembly, forms a heterodimer with SIMC1. Interacts with SLF1 (via N-terminus); this interaction links RAD18 to the SMC5-SMC6 complex. Interacts with RAD18; this interaction is increased in a SLF1-dependent manner. Interacts with SMC5 and SMC6.

It localises to the nucleus. The protein localises to the PML body. Its function is as follows. Plays a role in the DNA damage response (DDR) pathway by regulating postreplication repair of UV-damaged DNA and genomic stability maintenance. The SLF1-SLF2 complex acts to link RAD18 with the SMC5-SMC6 complex at replication-coupled interstrand cross-links (ICL) and DNA double-strand breaks (DSBs) sites on chromatin during DNA repair in response to stalled replication forks. Promotes the recruitment of the SMC5-SMC6 complex to DNA lesions. May play a role in SMC5-SMC6 complex recruitment for viral restriction. Forms a complex with SIMC1 and this complex is required to recruit SMC5-SMC6 complex to PML nuclear bodies and sites of viral replication. The sequence is that of SMC5-SMC6 complex localization factor protein 2 from Mus musculus (Mouse).